We begin with the raw amino-acid sequence, 320 residues long: MADPIRSYLDFEKPVAELDSKIDELRALAANGSDISEEISRIEDKAKAALHELYANLTPWQKTQVARHPQRPHCIDYIAGLITEFTPLAGDRKFSDDDAMIGGFGRFRGESVCIIGQEKGSTTESRLKHNFGMARPEGYRKAVRLMDMADRFGIRILSLVDTAGAYPGIGAEERGQAEAIARSTEACLNLTVPNVAVILGEGGSGGAIAIATANRVMMLEHAVYSVISPEGAASILWRDATKAQEAATNLKVTAQDLARFGIIDTVLKEPPGGAHRDPADMIARTGDAIAQAFSDLAPLDPKTVRTQRRQKFLDIGRRLG.

Residues 42–295 (IEDKAKAALH…GDAIAQAFSD (254 aa)) form the CoA carboxyltransferase C-terminal domain.

The protein belongs to the AccA family. In terms of assembly, acetyl-CoA carboxylase is a heterohexamer composed of biotin carboxyl carrier protein (AccB), biotin carboxylase (AccC) and two subunits each of ACCase subunit alpha (AccA) and ACCase subunit beta (AccD).

The protein resides in the cytoplasm. The catalysed reaction is N(6)-carboxybiotinyl-L-lysyl-[protein] + acetyl-CoA = N(6)-biotinyl-L-lysyl-[protein] + malonyl-CoA. The protein operates within lipid metabolism; malonyl-CoA biosynthesis; malonyl-CoA from acetyl-CoA: step 1/1. Its function is as follows. Component of the acetyl coenzyme A carboxylase (ACC) complex. First, biotin carboxylase catalyzes the carboxylation of biotin on its carrier protein (BCCP) and then the CO(2) group is transferred by the carboxyltransferase to acetyl-CoA to form malonyl-CoA. This is Acetyl-coenzyme A carboxylase carboxyl transferase subunit alpha from Afipia carboxidovorans (strain ATCC 49405 / DSM 1227 / KCTC 32145 / OM5) (Oligotropha carboxidovorans).